We begin with the raw amino-acid sequence, 65 residues long: Toxin AaHIT4 (65 aa).

Residues 1–64 enclose the LCN-type CS-alpha/beta domain; sequence EHGYLLNKYT…LWNYKTNKCD (64 aa). 4 disulfides stabilise this stretch: Cys12-Cys63, Cys16-Cys38, Cys23-Cys45, and Cys27-Cys47.

The protein belongs to the long (4 C-C) scorpion toxin superfamily. Sodium channel inhibitor family. As to expression, expressed by the venom gland.

The protein resides in the secreted. Functionally, has a toxic effect on insects and mammals and is capable of competing with anti-insect scorpion toxins for binding to the sodium channel (Nav) of insects. It also modulates the binding of alpha-type and beta-type anti-mammal scorpion toxins to the mammal sodium channel. It may act on both site 3 and site 4 of voltage-gated sodium channels. In Androctonus australis (Sahara scorpion), this protein is Toxin AaHIT4.